The primary structure comprises 99 residues: uncharacterized protein (99 aa).

This is an uncharacterized protein from Acidianus bottle-shaped virus (isolate Italy/Pozzuoli) (ABV).